A 182-amino-acid polypeptide reads, in one-letter code: Ribosome-recycling factor (182 aa).

It belongs to the RRF family.

It localises to the cytoplasm. Functionally, responsible for the release of ribosomes from messenger RNA at the termination of protein biosynthesis. May increase the efficiency of translation by recycling ribosomes from one round of translation to another. The protein is Ribosome-recycling factor of Thermosynechococcus vestitus (strain NIES-2133 / IAM M-273 / BP-1).